A 751-amino-acid chain; its full sequence is Catalase-peroxidase (751 aa).

Positions 1-21 (MSNESKCPFHQTAGGGTTNRD) are disordered. Positions 90–244 (WHSAGTYRIG…LAAVQMGLIY (155 aa)) form a cross-link, tryptophyl-tyrosyl-methioninium (Trp-Tyr) (with M-270). Histidine 91 functions as the Proton acceptor in the catalytic mechanism. Residues 244 to 270 (YVNPEGPEGNPDPVASGKDIRETFGRM) constitute a cross-link (tryptophyl-tyrosyl-methioninium (Tyr-Met) (with W-90)). Histidine 285 provides a ligand contact to heme b. A disordered region spans residues 365–390 (AHQWRPKEGKGAGTVPDAHDPGKKHA).

It belongs to the peroxidase family. Peroxidase/catalase subfamily. Homodimer or homotetramer. Heme b serves as cofactor. Formation of the three residue Trp-Tyr-Met cross-link is important for the catalase, but not the peroxidase activity of the enzyme.

It carries out the reaction H2O2 + AH2 = A + 2 H2O. The enzyme catalyses 2 H2O2 = O2 + 2 H2O. Bifunctional enzyme with both catalase and broad-spectrum peroxidase activity. The polypeptide is Catalase-peroxidase (Pseudomonas putida (strain GB-1)).